The sequence spans 842 residues: Netrin receptor UNC5A (842 aa).

The signal sequence occupies residues 1-25 (MAVRPGLWPALLGIVLAAWLRGSGA). Residues 26–306 (QQSATVANPV…ASGPEDVALY (281 aa)) are Extracellular-facing. The region spanning 44-141 (PHFLVEPEDV…SGTTKSQKAY (98 aa)) is the Ig-like domain. Cystine bridges form between C65/C126, C77/C124, and C170/C221. N-linked (GlcNAc...) asparagine glycosylation is found at N107 and N218. The Ig-like C2-type domain maps to 155–234 (PLAKEVSLEQ…NIVARRRSAS (80 aa)). Residues 242 to 294 (DGSWSPWSKWSACGLDCTHWRSRECSDPAPRNGGEECQGTDLDTRNCTSDLCV) enclose the TSP type-1 domain. C-linked (Man) tryptophan glycosylation is found at W245, W248, and W251. 3 cysteine pairs are disulfide-bonded: C254-C288, C258-C293, and C266-C278. N-linked (GlcNAc...) asparagine glycosylation occurs at N287. The chain crosses the membrane as a helical span at residues 307-327 (VGLIAVAVCLVLLLLVLILVY). The Cytoplasmic segment spans residues 328–842 (CRKKEGLDSD…GLFTVSEAEC (515 aa)). In terms of domain architecture, ZU5 spans 441–584 (NMTYGTFNFL…LGRFALVGEA (144 aa)). Positions 605–623 (SLEYNIRVYCLHDTHDALK) are interaction with DCC. Positions 761-841 (QKIISSLDPP…AGLFTVSEAE (81 aa)) constitute a Death domain.

It belongs to the unc-5 family. As to quaternary structure, homodimer and homooligomer. Interacts with the cytoplasmic part of DCC. Interacts with MAGED1. Interacts with PRKCABP, possibly mediating some interaction with PKC. Interacts (via extracellular domain) with FLRT2 (via extracellular domain). Interacts (via extracellular domain) with FLRT3 (via extracellular domain). Phosphorylated on cytoplasmic tyrosine residues. Phosphorylated by PKC in vitro. In terms of processing, proteolytically cleaved by caspases during apoptosis. The cleavage does not take place when the receptor is associated with netrin ligand. Its cleavage by caspases is required to induce apoptosis. Post-translationally, the two extracellular TSRs of UNC5A contain WxxWxxWxxC motifs that can be C-mannosylated on all tryptophans. DPY19L1 preferentially mannosylates the first two tryptophans and DPY19L3 prefers the third. C-mannosylation by DPY19L1 is required for transport of UNC5A from the endoplasmic reticulum to the cell surface.

It localises to the cell membrane. The protein localises to the membrane raft. It is found in the cell projection. Its subcellular location is the neuron projection. In terms of biological role, receptor for netrin required for axon guidance. Functions in the netrin signaling pathway and promotes neurite outgrowth in response to NTN1. Mediates axon repulsion of neuronal growth cones in the developing nervous system in response to netrin. Axon repulsion in growth cones may be mediated by its association with DCC that may trigger signaling for repulsion. It also acts as a dependence receptor required for apoptosis induction when not associated with netrin ligand. This chain is Netrin receptor UNC5A (UNC5A), found in Homo sapiens (Human).